A 204-amino-acid polypeptide reads, in one-letter code: uncharacterized protein (204 aa).

An N-terminal signal peptide occupies residues 1-16; sequence MKYTFLAVLSAVTVLA.

The protein resides in the secreted. This is an uncharacterized protein from Arthroderma benhamiae (strain ATCC MYA-4681 / CBS 112371) (Trichophyton mentagrophytes).